Here is a 71-residue protein sequence, read N- to C-terminus: Large ribosomal subunit protein bL31 (71 aa).

4 residues coordinate Zn(2+): Cys-16, Cys-18, Cys-38, and Cys-41.

This sequence belongs to the bacterial ribosomal protein bL31 family. Type A subfamily. In terms of assembly, part of the 50S ribosomal subunit. It depends on Zn(2+) as a cofactor.

Functionally, binds the 23S rRNA. In Chromobacterium violaceum (strain ATCC 12472 / DSM 30191 / JCM 1249 / CCUG 213 / NBRC 12614 / NCIMB 9131 / NCTC 9757 / MK), this protein is Large ribosomal subunit protein bL31.